The chain runs to 221 residues: UPF0502 protein PSPTO_2686 (221 aa).

This sequence belongs to the UPF0502 family.

The polypeptide is UPF0502 protein PSPTO_2686 (Pseudomonas syringae pv. tomato (strain ATCC BAA-871 / DC3000)).